We begin with the raw amino-acid sequence, 425 residues long: UPF0597 protein KPN78578_43500 (425 aa).

It belongs to the UPF0597 family.

This chain is UPF0597 protein KPN78578_43500, found in Klebsiella pneumoniae subsp. pneumoniae (strain ATCC 700721 / MGH 78578).